A 306-amino-acid polypeptide reads, in one-letter code: Glutaminase (306 aa).

Ser64, Asn115, Glu159, Asn166, Tyr190, Tyr242, and Val260 together coordinate substrate.

It belongs to the glutaminase family. In terms of assembly, homotetramer.

It carries out the reaction L-glutamine + H2O = L-glutamate + NH4(+). The chain is Glutaminase from Aliivibrio salmonicida (strain LFI1238) (Vibrio salmonicida (strain LFI1238)).